A 228-amino-acid polypeptide reads, in one-letter code: CD9 antigen (228 aa).

At 2–12 the chain is on the cytoplasmic side; sequence PVKGGTKCIKY. Cys9 carries S-palmitoyl cysteine lipidation. A helical membrane pass occupies residues 13 to 33; it reads LLFGFNFIFWLAGIAVLAIGL. At 34-55 the chain is on the extracellular side; that stretch reads WLRFDSQTKSIFEQETNNNNSS. 2 N-linked (GlcNAc...) asparagine glycosylation sites follow: Asn52 and Asn53. The helical transmembrane segment at 56 to 76 threads the bilayer; the sequence is FYTGVYILIGAGALMMLVGFL. Residues 77-87 are Cytoplasmic-facing; that stretch reads GCCGAVQESQC. S-palmitoyl cysteine attachment occurs at residues Cys78, Cys79, and Cys87. A helical transmembrane segment spans residues 88-111; the sequence is MLGLFFGFLLVIFAIEIAAAIWGY. Topologically, residues 112-195 are extracellular; it reads SHKDEVIKEV…KEVFDNKFHI (84 aa). Intrachain disulfides connect Cys152-Cys181 and Cys153-Cys167. The chain crosses the membrane as a helical span at residues 196 to 221; that stretch reads IGAVGIGIAVVMIFGMIFSMILCCAI. 2 S-palmitoyl cysteine lipidation sites follow: Cys218 and Cys219. The Cytoplasmic portion of the chain corresponds to 222–228; the sequence is RRNREMV.

This sequence belongs to the tetraspanin (TM4SF) family. Forms both disulfide-linked homodimers and higher homooligomers as well as heterooligomers with other members of the tetraspanin family. Interacts (via the second extracellular domain) with integrin ITGAV:ITGB3. Interacts with integrin ITGA6:ITGB1; interaction takes place in oocytes and is involved in sperm-egg fusion. Part of integrin-tetraspanin complexes composed of CD81, beta-1 and beta-2 integrins in the membrane of monocyte/macrophages. Interacts with CD63; identified in a complex with CD63 and ITGB3. Associates with CR2/CD21 and with PTGFRN/CD9P1. Part of a complex composed of CD9, CD81, PTGFRN and IGSF8. Interacts directly with IGSF8. Interacts with PDPN; this interaction is homophilic and attenuates platelet aggregation and pulmonary metastasis induced by PDPN. Interacts (on T cell side) with CD81 at immunological synapses between antigen-presenting cells and T cells. Post-translationally, palmitoylated at a low, basal level in unstimulated platelets. The level of palmitoylation increases when platelets are activated by thrombin (in vitro). The protein exists in three forms with molecular masses between 22 and 27 kDa, and is known to carry covalently linked fatty acids. Palmitoylation by ZDHHC2 regulates CD9 expression, association with other tetraspanin family proteins and function in cell adhesion. Detected in platelets (at protein level). Expressed by a variety of hematopoietic and epithelial cells.

It localises to the cell membrane. The protein localises to the membrane. It is found in the secreted. Its subcellular location is the extracellular exosome. Integral membrane protein associated with integrins, which regulates different processes, such as sperm-egg fusion, platelet activation and aggregation, and cell adhesion. Present at the cell surface of oocytes and plays a key role in sperm-egg fusion, possibly by organizing multiprotein complexes and the morphology of the membrane required for the fusion. In myoblasts, associates with CD81 and PTGFRN and inhibits myotube fusion during muscle regeneration. In macrophages, associates with CD81 and beta-1 and beta-2 integrins, and prevents macrophage fusion into multinucleated giant cells specialized in ingesting complement-opsonized large particles. Also prevents the fusion between mononuclear cell progenitors into osteoclasts in charge of bone resorption. Acts as a receptor for PSG17. Involved in platelet activation and aggregation. Regulates paranodal junction formation. Involved in cell adhesion, cell motility and tumor metastasis. The sequence is that of CD9 antigen from Homo sapiens (Human).